The primary structure comprises 195 residues: 3-isopropylmalate dehydratase small subunit (195 aa).

It belongs to the LeuD family. LeuD type 1 subfamily. Heterodimer of LeuC and LeuD.

The catalysed reaction is (2R,3S)-3-isopropylmalate = (2S)-2-isopropylmalate. Its pathway is amino-acid biosynthesis; L-leucine biosynthesis; L-leucine from 3-methyl-2-oxobutanoate: step 2/4. Catalyzes the isomerization between 2-isopropylmalate and 3-isopropylmalate, via the formation of 2-isopropylmaleate. This is 3-isopropylmalate dehydratase small subunit from Koribacter versatilis (strain Ellin345).